The primary structure comprises 365 residues: sn-glycerol-3-phosphate import ATP-binding protein UgpC (365 aa).

One can recognise an ABC transporter domain in the interval 4–234; the sequence is LSLRNVQKHY…PASTFVAGFI (231 aa). 36–43 provides a ligand contact to ATP; that stretch reads GPSGCGKS.

The protein belongs to the ABC transporter superfamily. sn-glycerol-3-phosphate importer (TC 3.A.1.1.3) family. The complex is composed of two ATP-binding proteins (UgpC), two transmembrane proteins (UgpA and UgpE) and a solute-binding protein (UgpB).

Its subcellular location is the cell inner membrane. It carries out the reaction sn-glycerol 3-phosphate(out) + ATP + H2O = sn-glycerol 3-phosphate(in) + ADP + phosphate + H(+). In terms of biological role, part of the ABC transporter complex UgpBAEC involved in sn-glycerol-3-phosphate (G3P) import. Responsible for energy coupling to the transport system. The chain is sn-glycerol-3-phosphate import ATP-binding protein UgpC from Ralstonia nicotianae (strain ATCC BAA-1114 / GMI1000) (Ralstonia solanacearum).